A 427-amino-acid chain; its full sequence is Septin-8-B (427 aa).

Residues 39–305 (QGFCFNILCV…ELYRRCKLEE (267 aa)) enclose the Septin-type G domain. Residues 49–56 (GETGIGKS) are G1 motif. GTP is bound by residues 49–56 (GETGIGKS), G104, 185–193 (KADTISKSE), G239, and R254. The G3 motif stretch occupies residues 101 to 104 (DTVG). A G4 motif region spans residues 184 to 187 (AKAD). Positions 320 to 407 (LQETYEAKRK…RRKVAMETLQ (88 aa)) form a coiled coil. Polar residues predominate over residues 406–418 (LQSQSFQATSQQP). Positions 406 to 427 (LQSQSFQATSQQPLKKDKDRKN) are disordered.

It belongs to the TRAFAC class TrmE-Era-EngA-EngB-Septin-like GTPase superfamily. Septin GTPase family.

This chain is Septin-8-B (sept8-b), found in Xenopus laevis (African clawed frog).